The following is a 99-amino-acid chain: Large ribosomal subunit protein bL21 (99 aa).

It belongs to the bacterial ribosomal protein bL21 family. As to quaternary structure, part of the 50S ribosomal subunit. Contacts protein L20.

Its function is as follows. This protein binds to 23S rRNA in the presence of protein L20. In Mesomycoplasma hyopneumoniae (strain 232) (Mycoplasma hyopneumoniae), this protein is Large ribosomal subunit protein bL21.